A 741-amino-acid polypeptide reads, in one-letter code: NAD(P)H-quinone oxidoreductase subunit 5, chloroplastic (741 aa).

14 helical membrane passes run Trp9–Val29, Trp40–Ile60, Ile89–Ile109, Leu122–Val139, Ile147–Thr167, Gly185–Phe205, Asn219–Ala239, Thr258–Ala278, Leu280–Ile300, Thr396–Ser416, Trp425–Tyr445, Leu544–Phe564, Ile603–Val623, and Tyr719–Leu739.

The protein belongs to the complex I subunit 5 family. In terms of assembly, NDH is composed of at least 16 different subunits, 5 of which are encoded in the nucleus.

Its subcellular location is the plastid. The protein resides in the chloroplast thylakoid membrane. It catalyses the reaction a plastoquinone + NADH + (n+1) H(+)(in) = a plastoquinol + NAD(+) + n H(+)(out). The enzyme catalyses a plastoquinone + NADPH + (n+1) H(+)(in) = a plastoquinol + NADP(+) + n H(+)(out). Its function is as follows. NDH shuttles electrons from NAD(P)H:plastoquinone, via FMN and iron-sulfur (Fe-S) centers, to quinones in the photosynthetic chain and possibly in a chloroplast respiratory chain. The immediate electron acceptor for the enzyme in this species is believed to be plastoquinone. Couples the redox reaction to proton translocation, and thus conserves the redox energy in a proton gradient. The protein is NAD(P)H-quinone oxidoreductase subunit 5, chloroplastic (ndhF) of Liriodendron tulipifera (Tuliptree).